Reading from the N-terminus, the 609-residue chain is Pentatricopeptide repeat-containing protein At5g13770, chloroplastic (609 aa).

A chloroplast-targeting transit peptide spans Met-1–Arg-44. PPR repeat units lie at residues Glu-103 to Pro-137, Asp-138 to Asp-168, Ala-172 to Pro-207, Ser-208 to Phe-242, Ser-247 to Glu-281, Ser-282 to Lys-316, Asp-317 to Val-351, Thr-352 to Ala-386, Gly-387 to Lys-421, Cys-422 to Pro-456, Asn-457 to Pro-491, Asp-492 to Ile-526, and Asp-527 to Leu-561.

The protein belongs to the PPR family. P subfamily.

Its subcellular location is the plastid. The protein resides in the chloroplast. The protein is Pentatricopeptide repeat-containing protein At5g13770, chloroplastic of Arabidopsis thaliana (Mouse-ear cress).